Here is a 99-residue protein sequence, read N- to C-terminus: DNA-binding protein HU (99 aa).

The interval H63–A82 is disordered.

It belongs to the bacterial histone-like protein family. In terms of assembly, homodimer.

Histone-like DNA-binding protein which is capable of wrapping DNA to stabilize it, and thus to prevent its denaturation under extreme environmental conditions. The chain is DNA-binding protein HU (hup) from Rickettsia prowazekii (strain Madrid E).